The primary structure comprises 140 residues: Large ribosomal subunit protein uL11 (140 aa).

The protein belongs to the universal ribosomal protein uL11 family. In terms of assembly, part of the ribosomal stalk of the 50S ribosomal subunit. Interacts with L10 and the large rRNA to form the base of the stalk. L10 forms an elongated spine to which L12 dimers bind in a sequential fashion forming a multimeric L10(L12)X complex. In terms of processing, one or more lysine residues are methylated.

In terms of biological role, forms part of the ribosomal stalk which helps the ribosome interact with GTP-bound translation factors. The polypeptide is Large ribosomal subunit protein uL11 (Caldanaerobacter subterraneus subsp. tengcongensis (strain DSM 15242 / JCM 11007 / NBRC 100824 / MB4) (Thermoanaerobacter tengcongensis)).